The chain runs to 545 residues: T-complex protein 1 subunit gamma (545 aa).

Met1 carries the N-acetylmethionine modification. A disordered region spans residues 1-24 (MMGHRPVLVLSQNTKRESGRKVQS). Ser11 is subject to Phosphoserine. Lys15 is covalently cross-linked (Glycyl lysine isopeptide (Lys-Gly) (interchain with G-Cter in SUMO2)). Gly42 contributes to the ADP binding site. Residue Gly42 participates in ATP binding. Residue Asp93 participates in Mg(2+) binding. Gly94, Thr95, Thr96, Ser97, Thr162, and Lys163 together coordinate ADP. Gly94, Thr95, and Thr96 together coordinate ATP. Ser170 carries the post-translational modification Phosphoserine. Lys222 is subject to N6-acetyllysine. Phosphoserine occurs at positions 243 and 244. Tyr247 is subject to Phosphotyrosine. Residues Lys248 and Lys249 each participate in a glycyl lysine isopeptide (Lys-Gly) (interchain with G-Cter in SUMO2) cross-link. Ser252 bears the Phosphoserine mark. Cys366 and Cys372 are joined by a disulfide. Lys381 is covalently cross-linked (Glycyl lysine isopeptide (Lys-Gly) (interchain with G-Cter in SUMO2)). Position 411 (Gly411) interacts with ADP. Gly411 is an ATP binding site. Phosphothreonine occurs at positions 430 and 459. Residues Gly482, Glu483, Glu497, and Lys502 each coordinate ADP. Gly482 is an ATP binding site. Position 497 (Glu497) interacts with ATP. The tract at residues 526–545 (HKKKGDDQSRQGGAPDAGQE) is disordered.

It belongs to the TCP-1 chaperonin family. Component of the chaperonin-containing T-complex (TRiC), a hexadecamer composed of two identical back-to-back stacked rings enclosing a protein folding chamber. Each ring is made up of eight different subunits: TCP1/CCT1, CCT2, CCT3, CCT4, CCT5, CCT6A/CCT6, CCT7, CCT8. Interacts with PACRG. Interacts with DNAAF4. Interacts with DLEC1.

It localises to the cytoplasm. It carries out the reaction ATP + H2O = ADP + phosphate + H(+). In terms of biological role, component of the chaperonin-containing T-complex (TRiC), a molecular chaperone complex that assists the folding of actin, tubulin and other proteins upon ATP hydrolysis. The TRiC complex mediates the folding of WRAP53/TCAB1, thereby regulating telomere maintenance. As part of the TRiC complex may play a role in the assembly of BBSome, a complex involved in ciliogenesis regulating transports vesicles to the cilia. The polypeptide is T-complex protein 1 subunit gamma (CCT3) (Bos taurus (Bovine)).